The chain runs to 262 residues: Adenosylcobinamide-GDP ribazoletransferase (262 aa).

A run of 5 helical transmembrane segments spans residues 41–61 (AFPL…FILG), 65–85 (ASSL…TGAL), 115–132 (IGTY…LRVS), 134–156 (LAAF…TAAL), and 195–215 (GVLL…AVWL).

Belongs to the CobS family. The cofactor is Mg(2+).

Its subcellular location is the cell inner membrane. The catalysed reaction is alpha-ribazole + adenosylcob(III)inamide-GDP = adenosylcob(III)alamin + GMP + H(+). The enzyme catalyses alpha-ribazole 5'-phosphate + adenosylcob(III)inamide-GDP = adenosylcob(III)alamin 5'-phosphate + GMP + H(+). It participates in cofactor biosynthesis; adenosylcobalamin biosynthesis; adenosylcobalamin from cob(II)yrinate a,c-diamide: step 7/7. In terms of biological role, joins adenosylcobinamide-GDP and alpha-ribazole to generate adenosylcobalamin (Ado-cobalamin). Also synthesizes adenosylcobalamin 5'-phosphate from adenosylcobinamide-GDP and alpha-ribazole 5'-phosphate. The polypeptide is Adenosylcobinamide-GDP ribazoletransferase (Rhizobium meliloti (strain 1021) (Ensifer meliloti)).